A 147-amino-acid chain; its full sequence is Hemoglobin subunit gamma (147 aa).

In terms of domain architecture, Globin spans 3-147 (YFTAEEKAAI…VASALARKYH (145 aa)). Heme b is bound by residues His-64 and His-93.

This sequence belongs to the globin family. In terms of assembly, heterotetramer of two alpha chains and two gamma chains in fetal hemoglobin (Hb F). As to expression, red blood cells.

In terms of biological role, gamma chains make up the fetal hemoglobin F, in combination with alpha chains. The chain is Hemoglobin subunit gamma (HBG) from Dugong dugon (Dugong).